The primary structure comprises 352 residues: Nicotinate-nucleotide--dimethylbenzimidazole phosphoribosyltransferase (352 aa).

Glu-316 (proton acceptor) is an active-site residue.

The protein belongs to the CobT family.

It carries out the reaction 5,6-dimethylbenzimidazole + nicotinate beta-D-ribonucleotide = alpha-ribazole 5'-phosphate + nicotinate + H(+). The protein operates within nucleoside biosynthesis; alpha-ribazole biosynthesis; alpha-ribazole from 5,6-dimethylbenzimidazole: step 1/2. Catalyzes the synthesis of alpha-ribazole-5'-phosphate from nicotinate mononucleotide (NAMN) and 5,6-dimethylbenzimidazole (DMB). This Clostridium acetobutylicum (strain ATCC 824 / DSM 792 / JCM 1419 / IAM 19013 / LMG 5710 / NBRC 13948 / NRRL B-527 / VKM B-1787 / 2291 / W) protein is Nicotinate-nucleotide--dimethylbenzimidazole phosphoribosyltransferase.